The sequence spans 423 residues: Aspartic protease-like protein pytH (423 aa).

A signal peptide spans 1 to 16 (MWLSVALLTLLDGALA). In terms of domain architecture, Peptidase A1 spans 38–416 (TTDAIQIGTP…DFDKLRVGLA (379 aa)). The active site involves Asp-56. N-linked (GlcNAc...) asparagine glycosylation is found at Asn-88, Asn-97, Asn-168, Asn-196, Asn-231, and Asn-279. Asp-291 is a catalytic residue. A glycan (N-linked (GlcNAc...) asparagine) is linked at Asn-330. A disulfide bridge links Cys-338 with Cys-377.

This sequence belongs to the peptidase A1 family.

It participates in secondary metabolite biosynthesis. In terms of biological role, aspartic protease-like protein; part of the gene cluster that mediates the biosynthesis of pyranterreones, a family of antioxidative compounds. The first step of pyranonigrins biosynthesis is performed by the hybrid PKS-NRPS synthetase pytA that condenses 4 malonyl-CoA units ato the acetyl starter unit by the modular PKS of pytA. The acyl chain is then connected to an L-serine through the amide bond by the modular NRPS of pytA. A tetramic acid is formed and released from the PKS-NRPS pytA to give pyranterreone 5 with the help of the thioesterase pytI. Pyranterreone 5 could be methylated by pytC to afford pyranterreone 6. Both pyranterreones 5 and 6 are subsequently oxidized by the FAD-linked oxidoreductase pytB and the cytochrome P450 monooxygenase pytD to form the fused gamma-pyrone core, resulting in pyranterreones 7 and 11, respectively. The hydroxy group at C-8 of pyranterreones 7 and 11 are dehydrated by the aspartyl protease pytH to form a delta-7 double bond to give pyranterreones 3 and 1, 2 accordingly. The exo-methylene of pyranterreone 3 could be reduced into a pendant methyl by reductase pytE to provide pyranterreone 4, also known as cordylactam. Pyranterreone 4 can be reconverted to pyranterreone 3 through pytB-catalyzed dehydrogenation or further oxidized to pyranterreones 9 and 10. In Aspergillus terreus (strain NIH 2624 / FGSC A1156), this protein is Aspartic protease-like protein pytH.